A 401-amino-acid chain; its full sequence is 8-amino-7-oxononanoate synthase (401 aa).

Arg-24 is a substrate binding site. Residue 111 to 112 (GF) participates in pyridoxal 5'-phosphate binding. His-137 contacts substrate. 3 residues coordinate pyridoxal 5'-phosphate: Ser-183, His-211, and Thr-240. At Lys-243 the chain carries N6-(pyridoxal phosphate)lysine. Residue Thr-357 participates in substrate binding.

It belongs to the class-II pyridoxal-phosphate-dependent aminotransferase family. BioF subfamily. In terms of assembly, homodimer. Requires pyridoxal 5'-phosphate as cofactor.

The catalysed reaction is 6-carboxyhexanoyl-[ACP] + L-alanine + H(+) = (8S)-8-amino-7-oxononanoate + holo-[ACP] + CO2. The protein operates within cofactor biosynthesis; biotin biosynthesis. In terms of biological role, catalyzes the decarboxylative condensation of pimeloyl-[acyl-carrier protein] and L-alanine to produce 8-amino-7-oxononanoate (AON), [acyl-carrier protein], and carbon dioxide. This Xylella fastidiosa (strain M12) protein is 8-amino-7-oxononanoate synthase.